The following is a 1203-amino-acid chain: Cingulin (1203 aa).

The segment at 7 to 357 (MAEPRGPVDH…VMVSSGSTKA (351 aa)) is head. Residues 25–48 (EPVSGAEMGTLRRGGRRPAKDARA) are disordered. The ZIM signature appears at 48–62 (ASTYGVAVRVQGIAG). The segment at 54 to 67 (AVRVQGIAGQPFVV) is interaction with TJP1/ZO1. The segment at 89-127 (GASGALSSDLELPENPYSQVKGFPAPSQSSTSDEEPGAY) is disordered. Phosphoserine occurs at positions 95, 96, 135, 137, 140, 155, 165, 214, 217, 258, 276, 338, and 351. The tract at residues 186–266 (DSQLGGQARG…LSPLSGFSRS (81 aa)) is disordered. Positions 207-231 (EQRKRSKSLDSRLPRDTFEERERQS) are enriched in basic and acidic residues. The span at 232–266 (TNHWTSSTKYDNHVGTSKQPAQSQNLSPLSGFSRS) shows a compositional bias: polar residues. Positions 358-1160 (VAGQGELTRK…SLEKDSWRKA (803 aa)) form a coiled coil. Position 579 is an N6-acetyllysine (Lys-579). At Thr-712 the chain carries Phosphothreonine. 2 disordered regions span residues 1034-1053 (LASS…LESQ) and 1154-1181 (KDSW…EEFD). The segment covering 1044-1053 (SASLSQLESQ) has biased composition (low complexity). The tract at residues 1161–1203 (SRSAAESALKNEGLSSDEEFDSVYDPSSIASLLTESNLQTSSC) is tail. Phosphoserine is present on residues Ser-1175, Ser-1176, and Ser-1182.

It belongs to the cingulin family. Homodimer. Interacts with TJP1/ZO1. Interacts with SPEF1. In terms of tissue distribution, localized on the cytoplasmic face of tight junctions of polarized epithelia and some endothelia. Expressed in pancreas, kidney, liver and lung, but not in skeletal muscle, placenta, brain or heart.

It is found in the cell junction. Its subcellular location is the tight junction. Its function is as follows. Probably plays a role in the formation and regulation of the tight junction (TJ) paracellular permeability barrier. The sequence is that of Cingulin from Homo sapiens (Human).